The sequence spans 451 residues: UDP-N-acetylmuramoylalanine--D-glutamate ligase (451 aa).

An ATP-binding site is contributed by 119–125; that stretch reads GSNGKTT.

Belongs to the MurCDEF family.

The protein resides in the cytoplasm. It catalyses the reaction UDP-N-acetyl-alpha-D-muramoyl-L-alanine + D-glutamate + ATP = UDP-N-acetyl-alpha-D-muramoyl-L-alanyl-D-glutamate + ADP + phosphate + H(+). It participates in cell wall biogenesis; peptidoglycan biosynthesis. Its function is as follows. Cell wall formation. Catalyzes the addition of glutamate to the nucleotide precursor UDP-N-acetylmuramoyl-L-alanine (UMA). This Streptococcus agalactiae serotype III (strain NEM316) protein is UDP-N-acetylmuramoylalanine--D-glutamate ligase.